We begin with the raw amino-acid sequence, 122 residues long: UPF0231 protein VIBHAR_03438 (122 aa).

It belongs to the UPF0231 family.

The protein is UPF0231 protein VIBHAR_03438 of Vibrio campbellii (strain ATCC BAA-1116).